A 605-amino-acid polypeptide reads, in one-letter code: Replication protein E1 (605 aa).

The short motif at 76–78 is the Nuclear localization signal element; sequence KRK. Phosphoserine; by host is present on residues Ser-81 and Ser-89. A Nuclear export signal motif is present at residues 88–97; the sequence is LSPRLESISL. The segment at 145-308 is DNA-binding region; sequence GSGDVDIHYT…TILGHKSAEA (164 aa). The SF3 helicase domain occupies 407-557; that stretch reads INFISFLAAL…FPMKADNTPQ (151 aa). ATP is bound at residue 433-440; sequence GPPNTGKS. Residue Lys-514 forms a Glycyl lysine isopeptide (Lys-Gly) (interchain with G-Cter in SUMO) linkage.

It belongs to the papillomaviridae E1 protein family. In terms of assembly, can form hexamers. Interacts with E2 protein; this interaction increases E1 DNA binding specificity. Interacts with host DNA polymerase subunit POLA2. Interacts with host single stranded DNA-binding protein RPA1. Interacts with host TOP1; this interaction stimulates the enzymatic activity of TOP1. In terms of processing, phosphorylated. Post-translationally, sumoylated.

It is found in the host nucleus. It carries out the reaction Couples ATP hydrolysis with the unwinding of duplex DNA by translocating in the 3'-5' direction.. It catalyses the reaction ATP + H2O = ADP + phosphate + H(+). ATP-dependent DNA 3'-5' helicase required for initiation of viral DNA replication. It forms a complex with the viral E2 protein. The E1-E2 complex binds to the replication origin which contains binding sites for both proteins. During the initial step, a dimer of E1 interacts with a dimer of protein E2 leading to a complex that binds the viral origin of replication with high specificity. Then, a second dimer of E1 displaces the E2 dimer in an ATP-dependent manner to form the E1 tetramer. Following this, two E1 monomers are added to each half of the site, which results in the formation of two E1 trimers on the viral ori. Subsequently, two hexamers will be created. The double hexamer acts as a bi-directional helicase machinery and unwinds the viral DNA and then recruits the host DNA polymerase to start replication. The sequence is that of Replication protein E1 from Human papillomavirus 47.